Reading from the N-terminus, the 388-residue chain is Succinate--CoA ligase [ADP-forming] subunit beta (388 aa).

The 236-residue stretch at 9 to 244 (KQLFAEYGLP…PSQEDEREAH (236 aa)) folds into the ATP-grasp domain. ATP contacts are provided by residues Lys-46, 53–55 (GRG), Glu-99, Ser-102, and Glu-107. The Mg(2+) site is built by Asn-199 and Asp-213. Substrate contacts are provided by residues Asn-264 and 321 to 323 (GIV).

Belongs to the succinate/malate CoA ligase beta subunit family. In terms of assembly, heterotetramer of two alpha and two beta subunits. It depends on Mg(2+) as a cofactor.

The catalysed reaction is succinate + ATP + CoA = succinyl-CoA + ADP + phosphate. It carries out the reaction GTP + succinate + CoA = succinyl-CoA + GDP + phosphate. It functions in the pathway carbohydrate metabolism; tricarboxylic acid cycle; succinate from succinyl-CoA (ligase route): step 1/1. Functionally, succinyl-CoA synthetase functions in the citric acid cycle (TCA), coupling the hydrolysis of succinyl-CoA to the synthesis of either ATP or GTP and thus represents the only step of substrate-level phosphorylation in the TCA. The beta subunit provides nucleotide specificity of the enzyme and binds the substrate succinate, while the binding sites for coenzyme A and phosphate are found in the alpha subunit. This chain is Succinate--CoA ligase [ADP-forming] subunit beta, found in Aliivibrio salmonicida (strain LFI1238) (Vibrio salmonicida (strain LFI1238)).